Consider the following 205-residue polypeptide: Outer-membrane lipoprotein carrier protein (205 aa).

The N-terminal stretch at 1–19 (MKKIIICFIFVFSINVSFA) is a signal peptide.

Belongs to the LolA family. Monomer.

The protein localises to the periplasm. Its function is as follows. Participates in the translocation of lipoproteins from the inner membrane to the outer membrane. Only forms a complex with a lipoprotein if the residue after the N-terminal Cys is not an aspartate (The Asp acts as a targeting signal to indicate that the lipoprotein should stay in the inner membrane). This is Outer-membrane lipoprotein carrier protein from Francisella tularensis subsp. tularensis (strain FSC 198).